The following is a 384-amino-acid chain: Magnesium transporter MRS2-I (384 aa).

A run of 2 helical transmembrane segments spans residues 319 to 339 (LFLS…GIFG) and 356 to 376 (WVVL…VAYA). Residues 339–341 (GMN) carry the Required for magnesium transport activity motif.

This sequence belongs to the CorA metal ion transporter (MIT) (TC 1.A.35.5) family.

It localises to the membrane. Magnesium transporter that may mediate the influx of magnesium. This chain is Magnesium transporter MRS2-I (MRS2-I), found in Oryza sativa subsp. japonica (Rice).